We begin with the raw amino-acid sequence, 423 residues long: 26S proteasome regulatory subunit 6A homolog B (423 aa).

Phosphoserine is present on Ser-18. 211-218 (GPPGTGKT) is an ATP binding site. Residues Lys-234, Lys-278, and Lys-415 each participate in a glycyl lysine isopeptide (Lys-Gly) (interchain with G-Cter in ubiquitin) cross-link.

Belongs to the AAA ATPase family. In terms of assembly, component of the 19S regulatory particle (RP/PA700) base subcomplex of the 26S proteasome. The 26S proteasome is composed of a core protease (CP), known as the 20S proteasome, capped at one or both ends by the 19S regulatory particle (RP/PA700). The RP/PA700 complex is composed of at least 17 different subunits in two subcomplexes, the base and the lid, which form the portions proximal and distal to the 20S proteolytic core, respectively.

The protein resides in the cytoplasm. It localises to the nucleus. In terms of biological role, the 26S proteasome is involved in the ATP-dependent degradation of ubiquitinated proteins. The regulatory (or ATPase) complex confers ATP dependency and substrate specificity to the 26S complex. The chain is 26S proteasome regulatory subunit 6A homolog B (RPT5B) from Arabidopsis thaliana (Mouse-ear cress).